The sequence spans 2543 residues: MPSQIPQWREPIAIVSMACRLPGGIDKPLDLWDHVRAGCSSATAIPKDRFNAENFLSMDPNQKGAQAFRGAHFVKRDIKQFDHKFFGISKDTATAMDPQQKQLLEVVYECLESANISMETISKSKIGCYCAMFVSDYHDMLMQDPEYLPTFIAIGTTRTMLANRVSHALDLGGPSVTIDTACSGALVALHLACQALQAGECDGAVIGASNLFLSPDYALSLTRLGAIAADGQCKTFDASANGYGRGEGTNAVYVKRLSDAIRDGDSIRAVIRGTSSNSSGATPAITEPSGRAQADTILQAYAQAGINDFSETGYFECHGTGTPVGDCIELGAVGSVFSESHKTQDALWVGSTKPNVGHSEAASGLSSLIKVVLALEKGEIPPNTNYKTPNPKIDFDGWRVRVPTVPQPWPSKSIRRASVNSLGIGGSTAHAVVEFYEPPQLTNGSTNGANAVNGTNGINGTNGINGINGVNGHHEDEEKTNDPYFLLFTSGASKSSRETNEQNLLEFLKSHEECKSLTSPLVKALNARSQINIRPWKSFAVAQSVDGLVQQLETNALKVGAGPTIGGSPRVLFTFTGQGAMWSQMGKRLLDAFPVARNSLYNLEEVVRELQSSKTPTWSLIDKLTTELSQEEIDSPAIAHPLCMAVQIALTDVLSSWGVLPDGVVGHSGGETAAAYACGALTAKEAITVAYYRGIACQNAPSGAMLVIRSAPNAKELQDALERNDVQIACFNGPQNLTLAGSAEGVKNVAAELSTHGIVSRAVAVTRAYHTRAMKTVVDEYVGQLKGVIQPKIGRVPMYSSVTGLELKGTEVDADYWGANLVSPVLYTDAVTLALTSSNLKFDLCIELGPHSLLSRPTSEIVKSLPDSPQLPFFATMLRNADSSQQLMNLAGDLVLNGKQLDLDQVNKIAGKVGRLPNHIQDNLPAYAWDYSSTPWTEPRNSQEWRFRKSPRHEILGSRCRGVNPSAPTWRNKVSIEDAPWLVDHQVNGIVTFSFTTGIAMVIEAMMQVQEENKEIDWANHSFELQDFVFSNSIILPDESHIDLFLTLIPDNDNAKSEETWYDFTISSLRGDVDIRHCHGRAAVLETSKDNVALRRRTSWHHMPLKVPLKSYYKTLERVGYGYGPKFQLLTEVRVRPSLSACSAKIDMTSTAQSPVPGQRYLLHPAMMDAALQTPALANRSGFFQEIDTLLLPSKMKRISIRMPAKNTDVASCTTNTSPVGFSRIQGSVECYDSLSRPFFVVEGLQMDRATSDDNTTLPWLRLTWKPDIGDISSSDPMLSPIKIQSLPAEKKLVNLENLVKELIPLIVENGIEKGKDLAPHLLSYHSWFLDQAELHKERLAARHKQQNGFATVQDAIMNVVANSGISQTVDASIVSQLAINMSRIFQGDVEALAVWLENDLLYRFYEESIFTTSMNQKLLSVAELLAHKNPNMKILEIGAGTGGATTELLHGFSKAGGKNAYQSFTFTDISAGFFDKAKKKFAQWDRIEFKTLDVEKDIAEQGFTEKYDLVVAANVLHATADLPFAMKNIRSLLRDDGYLLVGELSEDLTSANFLWGPLTGWWLRPRSPGRSGPGLTLDEWRNELAADFDSVSEIEAKHDKTDTEQLSSTIVMMARAKPMEYTPTKPLSEEKVHIAGVGSDLSMQDHLQKYLGTRGISASSSSLEDLASREWAGEWLILVDETEGSFLASLQPEQLTALKSWLTKPIKCIWVTRKVYLDPQNTTGGLVTGFARTLRGENSQCQLYTLDLSSDGDITANVIYHVLERAHYSHDDPISRLDYEIAEKDGQLWTCRLVNDTPLENAYGPARKMDASSTQVVKAPHHLVMGEVGILESLTMAQDDAYTAIPDGHVLVDVKAAGLDDRDGFIAQGSLPATSFGRECSGVVTRCGANVSSFSPGDRVAVIGQGTFATQYLAPSDCCSKIPDWLSFEDAAAIPTNFITALYALTTPARVSTGQKILIVNASSTQGIALIKTATALKLDVYAAISDATTKPILTRVGLHSAKIFVNPTNTGRSSVSRSTTFQAYKLVLNTKSGQYADFAHLVANRGTYIEVTSGESSGDVGHVVPNKNVMFASVDLADAYQESKQDLGELLGQVIDMVEKREVDVDSSVSVNGLDSLQSSFAALIEGTSNKQVVSLANVDDQKLIKTRPKTSRFNPHKTYIITGGLGGLGRAISVWMASYGARHIILATSSITRASESGDLLQQLSSYGCNARVEVCDVGDSEAVERLVASIDTPVGGVIHSALKLSDCFFEDITLEDFDAVFGPKVNGSLNLHNSLLNQDLDFFVMLSSGCGVLGNEGQSNYAASSTFLDTFARYRQSLGLPASSVDLGFVEDVGNISERPEIQASLLSRGLRPITVRDVLRVVEGAIATGSPKNLITDSTYDSFVQSQIVLSFGMIDKATAEYQSWAQDAKFGLLRSRAADNAALDSDSDSGESAVQTAFKALRNTLGRLGDAPEGKEAALQPFVCTALVAKLAQVLSIKVGDIQPSRSAIQYGMDSLIAIEVRSWARYAFQIDLPINDLTNPYSIQDLSARVSRMIAG.

The 427-residue stretch at 9 to 435 (REPIAIVSMA…GSTAHAVVEF (427 aa)) folds into the Ketosynthase family 3 (KS3) domain. Catalysis depends on for beta-ketoacyl synthase activity residues C182, H318, and H358. Positions 574-881 (TFTGQGAMWS…PFFATMLRNA (308 aa)) are malonyl-CoA:ACP transacylase (MAT) domain. An N-terminal hotdog fold region spans residues 953 to 1089 (HEILGSRCRG…GRAAVLETSK (137 aa)). The interval 953–1253 (HEILGSRCRG…GLQMDRATSD (301 aa)) is dehydratase (DH) domain. The PKS/mFAS DH domain occupies 953 to 1256 (HEILGSRCRG…MDRATSDDNT (304 aa)). The Proton acceptor; for dehydratase activity role is filled by H985. Positions 1103–1256 (MPLKVPLKSY…MDRATSDDNT (154 aa)) are C-terminal hotdog fold. The active-site Proton donor; for dehydratase activity is the D1169. Residues 1399 to 1587 (NDLLYRFYEE…LDEWRNELAA (189 aa)) are methyltransferase (CMet) domain. The enoyl reductase (ER) domain stretch occupies residues 1830-2136 (GILESLTMAQ…IEGTSNKQVV (307 aa)). The interval 2161 to 2335 (TYIITGGLGG…ASSVDLGFVE (175 aa)) is ketoreductase (KR) domain. Positions 2464–2541 (ALQPFVCTAL…DLSARVSRMI (78 aa)) constitute a Carrier domain. An O-(pantetheine 4'-phosphoryl)serine modification is found at S2501.

Functionally, highly reducing polyketide synthase; part of the gene cluster that mediates the biosynthesis of gibepyrone A, a 2H-pyran-2-one metabolite exhibiting a moderate antimicrobial activity against Gram-positive bacteria and yeasts. The highly reducing polyketide synthase GPY1 is sufficient to produce gibepyrone A. GPY1 uses an acetyl-CoA starter unit, three malonyl-CoA extender units, and two SAM-dependent methylations to establish the gibepyrone A carbon backbone, followed by product release upon intramolecular cyclization. The gibepyrone A derivatives gibepyrones B and D are produced by cluster-independent P450 monooxygenases, probably to protect the fungus from the toxic product. In contrast, the formation of gibepyrones E and F from gibepyrone A is a spontaneous process and independent of enzymatic activity. This Gibberella fujikuroi (strain CBS 195.34 / IMI 58289 / NRRL A-6831) (Bakanae and foot rot disease fungus) protein is Highly reducing polyketide synthase GPY1.